Here is a 307-residue protein sequence, read N- to C-terminus: Fe-S cluster assembly protein dre2 (307 aa).

Disordered stretches follow at residues 1–26 (MTPV…PSTS) and 159–179 (KKKK…VGFV). Over residues 15–26 (AAPPTKTAPSTS) the composition is skewed to low complexity. Residues 23–152 (PSTSTRTLLL…EKPAYQEAAV (130 aa)) are N-terminal SAM-like domain. Residues 153-197 (PLRLGGKKKKAPAPTEQPPVATGVGFVDGNDELIDEDDLLSDDDL) form a linker region. [2Fe-2S] cluster is bound by residues Cys207, Cys219, Cys222, and Cys224. A fe-S binding site A region spans residues 207–224 (CQPEKAKKRRRPCKDCTC). Residues Cys270, Cys273, Cys281, and Cys284 each coordinate [4Fe-4S] cluster. Short sequence motifs (cx2C motif) lie at residues 270-273 (CNSC) and 281-284 (CSSC). The tract at residues 270–284 (CNSCSLGDAFRCSSC) is fe-S binding site B.

Belongs to the anamorsin family. In terms of assembly, monomer. Interacts with tah18. Interacts with mia40. [2Fe-2S] cluster serves as cofactor. The cofactor is [4Fe-4S] cluster.

It localises to the cytoplasm. It is found in the mitochondrion intermembrane space. Its function is as follows. Component of the cytosolic iron-sulfur (Fe-S) protein assembly (CIA) machinery required for the maturation of extramitochondrial Fe-S proteins. Part of an electron transfer chain functioning in an early step of cytosolic Fe-S biogenesis, facilitating the de novo assembly of a [4Fe-4S] cluster on the scaffold complex cfd1-nbp35. Electrons are transferred to dre2 from NADPH via the FAD- and FMN-containing protein tah18. Tah18-dre2 are also required for the assembly of the diferric tyrosyl radical cofactor of ribonucleotide reductase (RNR), probably by providing electrons for reduction during radical cofactor maturation in the catalytic small subunit rnr2. In Aspergillus terreus (strain NIH 2624 / FGSC A1156), this protein is Fe-S cluster assembly protein dre2.